A 570-amino-acid polypeptide reads, in one-letter code: Probable D-xylulose kinase A (570 aa).

The substrate site is built by histidine 95, arginine 166, aspartate 282, and asparagine 283. Residues tryptophan 364, 469-470 (GG), and asparagine 473 contribute to the ATP site.

It belongs to the FGGY kinase family.

It is found in the cytoplasm. The catalysed reaction is D-xylulose + ATP = D-xylulose 5-phosphate + ADP + H(+). In terms of biological role, highly specific D-xylulose kinase which participates in the catabolism of xylose. Xylose is a major component of hemicelluloses such as xylan. Most fungi utilize D-xylose via three enzymatic reactions, xylose reductase (XR), xylitol dehydrogenase (XDH), and xylulokinase, to form xylulose 5-phosphate, which enters pentose phosphate pathway. This is Probable D-xylulose kinase A (xkiA) from Aspergillus niger (strain ATCC MYA-4892 / CBS 513.88 / FGSC A1513).